The primary structure comprises 346 residues: S-adenosylmethionine:tRNA ribosyltransferase-isomerase (346 aa).

The protein belongs to the QueA family. As to quaternary structure, monomer.

The protein localises to the cytoplasm. The enzyme catalyses 7-aminomethyl-7-carbaguanosine(34) in tRNA + S-adenosyl-L-methionine = epoxyqueuosine(34) in tRNA + adenine + L-methionine + 2 H(+). It functions in the pathway tRNA modification; tRNA-queuosine biosynthesis. Its function is as follows. Transfers and isomerizes the ribose moiety from AdoMet to the 7-aminomethyl group of 7-deazaguanine (preQ1-tRNA) to give epoxyqueuosine (oQ-tRNA). The protein is S-adenosylmethionine:tRNA ribosyltransferase-isomerase of Nitrosomonas eutropha (strain DSM 101675 / C91 / Nm57).